The primary structure comprises 417 residues: Serine hydroxymethyltransferase (417 aa).

Residues Leu-122 and Gly-126–Leu-128 contribute to the (6S)-5,6,7,8-tetrahydrofolate site. Lys-231 bears the N6-(pyridoxal phosphate)lysine mark.

Belongs to the SHMT family. As to quaternary structure, homodimer. Requires pyridoxal 5'-phosphate as cofactor.

The protein localises to the cytoplasm. The enzyme catalyses (6R)-5,10-methylene-5,6,7,8-tetrahydrofolate + glycine + H2O = (6S)-5,6,7,8-tetrahydrofolate + L-serine. Its pathway is one-carbon metabolism; tetrahydrofolate interconversion. It functions in the pathway amino-acid biosynthesis; glycine biosynthesis; glycine from L-serine: step 1/1. Functionally, catalyzes the reversible interconversion of serine and glycine with tetrahydrofolate (THF) serving as the one-carbon carrier. This reaction serves as the major source of one-carbon groups required for the biosynthesis of purines, thymidylate, methionine, and other important biomolecules. Also exhibits THF-independent aldolase activity toward beta-hydroxyamino acids, producing glycine and aldehydes, via a retro-aldol mechanism. This chain is Serine hydroxymethyltransferase, found in Caldicellulosiruptor saccharolyticus (strain ATCC 43494 / DSM 8903 / Tp8T 6331).